The primary structure comprises 226 residues: ATP synthase F(0) complex subunit a (226 aa).

A run of 6 helical transmembrane segments spans residues P12–P32, W68–L88, Q97–F117, I138–V158, I164–I184, and A189–I209.

It belongs to the ATPase A chain family. In terms of assembly, component of the ATP synthase complex composed at least of ATP5F1A/subunit alpha, ATP5F1B/subunit beta, ATP5MC1/subunit c (homooctomer), MT-ATP6/subunit a, MT-ATP8/subunit 8, ATP5ME/subunit e, ATP5MF/subunit f, ATP5MG/subunit g, ATP5MK/subunit k, ATP5MJ/subunit j, ATP5F1C/subunit gamma, ATP5F1D/subunit delta, ATP5F1E/subunit epsilon, ATP5PF/subunit F6, ATP5PB/subunit b, ATP5PD/subunit d, ATP5PO/subunit OSCP. ATP synthase complex consists of a soluble F(1) head domain (subunits alpha(3) and beta(3)) - the catalytic core - and a membrane F(0) domain - the membrane proton channel (subunits c, a, 8, e, f, g, k and j). These two domains are linked by a central stalk (subunits gamma, delta, and epsilon) rotating inside the F1 region and a stationary peripheral stalk (subunits F6, b, d, and OSCP). Interacts with DNAJC30; interaction is direct.

The protein localises to the mitochondrion inner membrane. The catalysed reaction is H(+)(in) = H(+)(out). Subunit a, of the mitochondrial membrane ATP synthase complex (F(1)F(0) ATP synthase or Complex V) that produces ATP from ADP in the presence of a proton gradient across the membrane which is generated by electron transport complexes of the respiratory chain. ATP synthase complex consist of a soluble F(1) head domain - the catalytic core - and a membrane F(1) domain - the membrane proton channel. These two domains are linked by a central stalk rotating inside the F(1) region and a stationary peripheral stalk. During catalysis, ATP synthesis in the catalytic domain of F(1) is coupled via a rotary mechanism of the central stalk subunits to proton translocation. With the subunit c (ATP5MC1), forms the proton-conducting channel in the F(0) domain, that contains two crucial half-channels (inlet and outlet) that facilitate proton movement from the mitochondrial intermembrane space (IMS) into the matrix. Protons are taken up via the inlet half-channel and released through the outlet half-channel, following a Grotthuss mechanism. This Phoca vitulina (Harbor seal) protein is ATP synthase F(0) complex subunit a.